The chain runs to 879 residues: Exocyst complex component 1 (879 aa).

The disordered stretch occupies residues 29-94 (SQYSESEYDP…ATSLGNNDGD (66 aa)). The segment covering 40–52 (ETTHSESDSENHH) has biased composition (basic and acidic residues). The span at 64–76 (FLSQSNDNVSNGP) shows a compositional bias: polar residues. Positions 77-91 (SNNTLSSSATSLGNN) are enriched in low complexity. Coiled-coil stretches lie at residues 165 to 187 (YNKQ…NKME) and 226 to 248 (KGLK…KLKS). 2 disordered regions span residues 371 to 413 (QNDF…GKDG) and 455 to 557 (GQRN…PDAP). Residues 373 to 409 (DFFSSSSSSKKSIDSLNNNTSTSTPSKNSSSSSSSSS) show a composition bias toward low complexity. Residues 480 to 500 (KKSSKKDKKDKKDKKDKKDKK) show a composition bias toward basic residues. Residues 519–532 (DSNSPKSPNNAVNG) are compositionally biased toward polar residues. The span at 541-551 (SPPPPPPPPPK) shows a compositional bias: pro residues.

It belongs to the SEC3 family. The exocyst complex is composed of sec3/exoc1, sec5/exoc2, sec6/exoc3, sec8/exoc4, sec10/exoc5, sec15/exoc6, exo70/exoc7 and exo84/exoc8.

The protein localises to the midbody. It localises to the midbody ring. Its function is as follows. Component of the exocyst complex involved in the docking of exocytic vesicles with fusion sites on the plasma membrane. The protein is Exocyst complex component 1 (exoc1) of Dictyostelium discoideum (Social amoeba).